A 447-amino-acid chain; its full sequence is MEVAMTDLFTYIKDKNIAIDLNSKWFQELWYPLSKKTGSIITTRLLEWMGYSGEYKLQRQNFKRLLDNNNIPYEEIYHNDDRFLEHPSMIYEIEQTDKKQIKQKRWITLEMRNFKKAILRLNTKNAEVIRDYYLNLEEACFDYAEYQVNWLRKKSDLERSINEDKLNQSMLLLAIKDEELESEKEKGIQTRSMLKKVEEEKIKIENEKEKALRKMLRLKEITITQKERTITQLIYISTSVSYAAQHRFKVGGVEGRRRLRGRLSDYNGRSASGDEWYFCHLIDVADFRKAEGRIEDIIGKFRDKKDKEIYIMPYRKLLKVIELICQNYTIEVSTLNAMLKDIVDEFEDDAVPLIPDAIPQSTFKITRVEFGKNVDTTIIQGKATKAQLIKEFEKYIQTLSVDENEINRKELFDDLSRLYNFNRNDAWVWLKEFIESQEEKTFILKYR.

Residues 188–221 (IQTRSMLKKVEEEKIKIENEKEKALRKMLRLKEI) adopt a coiled-coil conformation.

The sequence is that of Putative MSV199 domain-containing protein 420R from Acheta domesticus (House cricket).